The following is a 168-amino-acid chain: Fusion protein P6 (168 aa).

4 helical membrane-spanning segments follow: residues 29 to 49 (IWPLLLIVAIIYFAPYLAGFF), 52 to 72 (AGFTGIGGIFSSIATTITPTL), 94 to 114 (FQSLGMGTQLAVVSGAAALIA), and 143 to 163 (ALPGWIWIAAGGLAVWALWPS).

Interacts with P3.

It is found in the virion membrane. Functionally, mediates the fusion with the host outer membrane during virus entry into the host cell. This Pseudomonas savastanoi pv. phaseolicola (Pseudomonas syringae pv. phaseolicola) protein is Fusion protein P6 (P6).